The chain runs to 378 residues: MQRLEFSESERSTVGIEWELALVDGATGDLVPIAKEVLGELGTSDGREHPQITHELLMNTVEVVSQVHRTVPAAIADLQELIGMVREVTDPRGVELMCAETHPFAQWYDQRITPSERYDRLLDRTQWWGRQMMIWGVHVHIGIDERDKALPIVNGLLTYYPHLQALSASSPFWAGANTGYASNRALMFQQLPTAGLPWQFGAWANYEEYVQDLVTTGVVTDHSEVRWDIRPSPKWGTVEMRACDGLSTADEVGAVAALIHCLTDQMLGELDDGVKPVTLQPWFVRENKWRAARYGLDAEVIVAPDGAERLVRDELAELTETLAPIAERLGCAEQLAQVHTILRTGASYQRQLAVAEANGGSLQEVVSSLTNELRNGLG.

This sequence belongs to the glutamate--cysteine ligase type 2 family. YbdK subfamily.

The catalysed reaction is L-cysteine + L-glutamate + ATP = gamma-L-glutamyl-L-cysteine + ADP + phosphate + H(+). In terms of biological role, ATP-dependent carboxylate-amine ligase which exhibits weak glutamate--cysteine ligase activity. In Leifsonia xyli subsp. xyli (strain CTCB07), this protein is Putative glutamate--cysteine ligase 2.